The sequence spans 356 residues: UDP-N-acetylglucosamine--N-acetylmuramyl-(pentapeptide) pyrophosphoryl-undecaprenol N-acetylglucosamine transferase (356 aa).

UDP-N-acetyl-alpha-D-glucosamine is bound by residues 12–14, N124, R163, S188, I242, and Q287; that span reads TGG.

It belongs to the glycosyltransferase 28 family. MurG subfamily.

The protein resides in the cell inner membrane. The enzyme catalyses di-trans,octa-cis-undecaprenyl diphospho-N-acetyl-alpha-D-muramoyl-L-alanyl-D-glutamyl-meso-2,6-diaminopimeloyl-D-alanyl-D-alanine + UDP-N-acetyl-alpha-D-glucosamine = di-trans,octa-cis-undecaprenyl diphospho-[N-acetyl-alpha-D-glucosaminyl-(1-&gt;4)]-N-acetyl-alpha-D-muramoyl-L-alanyl-D-glutamyl-meso-2,6-diaminopimeloyl-D-alanyl-D-alanine + UDP + H(+). The protein operates within cell wall biogenesis; peptidoglycan biosynthesis. Its function is as follows. Cell wall formation. Catalyzes the transfer of a GlcNAc subunit on undecaprenyl-pyrophosphoryl-MurNAc-pentapeptide (lipid intermediate I) to form undecaprenyl-pyrophosphoryl-MurNAc-(pentapeptide)GlcNAc (lipid intermediate II). The polypeptide is UDP-N-acetylglucosamine--N-acetylmuramyl-(pentapeptide) pyrophosphoryl-undecaprenol N-acetylglucosamine transferase (Pseudomonas fluorescens (strain Pf0-1)).